We begin with the raw amino-acid sequence, 817 residues long: Two pore calcium channel protein 1 (817 aa).

At 1-113 the chain is on the cytoplasmic side; that stretch reads MAVSLDDDVP…VHNHFFYMME (113 aa). Positions 20–65 are disordered; sequence SAPLPPSNSLGQEQLPSKNGGSHSIHNSQVPSLVSGADSPPSSPTG. The span at 26–51 shows a compositional bias: polar residues; that stretch reads SNSLGQEQLPSKNGGSHSIHNSQVPS. The helical transmembrane segment at 114–134 threads the bilayer; the sequence is LLTALLLLLLSLCESPAVPVL. The Extracellular portion of the chain corresponds to 135–137; that stretch reads KLH. Residues 138 to 158 form a helical membrane-spanning segment; that stretch reads TYVHATLELFALMVVVFELCM. At 159 to 172 the chain is on the cytoplasmic side; that stretch reads KLRWLGFHTFVRHK. A helical membrane pass occupies residues 173 to 193; that stretch reads RTMVKTSVLVVQFIEAIVVLV. At 194–202 the chain is on the extracellular side; that stretch reads RQTSHVRVT. Residues 203–221 traverse the membrane as a helical segment; that stretch reads RALRCIFLVDCRYCGGVRR. Residues 222–235 lie on the Cytoplasmic side of the membrane; sequence NLRQIFQSLPPFMD. Residues 236–256 traverse the membrane as a helical segment; sequence ILLLLLFFMIIFAILGFYLFS. Topologically, residues 257-263 are extracellular; sequence TNPSDPY. Positions 264–287 form an intramembrane region, helical; Pore-forming; the sequence is FSTLENSIVNLFVLLTTANFPDVM. Residues 288–298 are Extracellular-facing; it reads MPSYSRNPWSC. A helical membrane pass occupies residues 299 to 319; that stretch reads VFFIVYLSIELYFIMNLLLAV. Residues 320–445 are Cytoplasmic-facing; that stretch reads VFDTFNDIEK…NILVNSKAFQ (126 aa). The helical transmembrane segment at 446 to 466 threads the bilayer; that stretch reads YFMYLVVAVNGVWILVETFML. The Extracellular portion of the chain corresponds to 467–480; that stretch reads KGGNFTSKHVPWSY. Asparagine 470 carries N-linked (GlcNAc...) asparagine glycosylation. A helical membrane pass occupies residues 481-501; that stretch reads LVFLTIYGVELFMKVAGLGPV. The Cytoplasmic segment spans residues 502–504; the sequence is EYL. Residues 505-527 form a helical membrane-spanning segment; that stretch reads SSGWNLFDFSVTAFAFLGLLALT. Residues 528 to 535 lie on the Extracellular side of the membrane; that stretch reads LNMEPFYF. The helical transmembrane segment at 536 to 550 threads the bilayer; it reads IVVLRPLQLLRLFKL. Over 551–569 the chain is Cytoplasmic; that stretch reads KKRYRNVLDTMFELLPRMA. Residues 570–590 traverse the membrane as a helical segment; it reads SLGLTLLTFYYSFAIVGMEFF. Residues 591–630 lie on the Extracellular side of the membrane; it reads NGRLTPNCCNTSTVADAYRFINHTVGNKTKVEEGYYYLNN. The segment at residues 631-654 is an intramembrane region (helical; Pore-forming); sequence FDNILNSFVTLFELTVVNNWYIIM. Topologically, residues 655–671 are extracellular; the sequence is EGVTSQTSHWSRLYFMT. Residues 672-692 form a helical membrane-spanning segment; the sequence is FYIVTMVVMTIIVAFILEAFV. Over 693–817 the chain is Cytoplasmic; sequence FRMNYSRKSQ…GSRQRSQTVT (125 aa). Positions 770 to 794 form a coiled coil; the sequence is SLKMYQEEIQEWYEEHAREQEQQKL. The interval 785–817 is disordered; that stretch reads HAREQEQQKLRGSVPGPAAQQPPGSRQRSQTVT. Over residues 806 to 817 the composition is skewed to polar residues; it reads PPGSRQRSQTVT.

It belongs to the calcium channel alpha-1 subunit (TC 1.A.1.11) family. Two pore calcium channel subfamily. As to quaternary structure, dimer. Interacts with MTOR; the interaction is required for TPCN1 ATP sensitivity. Interacts with STX7, STX8 and STX12. Interacts with JPT2. Found in a complex with LSM12, TPCN1 and TPCN2. In terms of processing, N-glycosylated. Mainly expressed in epithelial tissues like lung, kidney, colon, spleen and liver (at protein level).

It is found in the lysosome membrane. It localises to the endosome membrane. The protein localises to the early endosome membrane. The protein resides in the recycling endosome membrane. The enzyme catalyses Na(+)(in) = Na(+)(out). The catalysed reaction is Ca(2+)(in) = Ca(2+)(out). Its activity is regulated as follows. Na(+) current is inhibited by ATP in a MTORC-dependent manner. ATP sensitivity is independent of PI(3,5)P2. Probably regulated by Mg(2+) ions, cytosolic Mg(2+) selectively inhibits outward current while lysosomal Mg(2+) modestly inhibits both the outward and inward currents. In the absence of Mg(2+), NAADP readily activates TPCN2, with properties similar to PI(3,5)P2. Both current elicited by PI(3,5)P2 as well as NAADP are inhibited by tetrandrine. Intracellular channel initially characterized as a non-selective Ca(2+)-permeable channel activated by NAADP (nicotinic acid adenine dinucleotide phosphate), it is also a voltage-gated highly-selective Na(+) channel activated directly by PI(3,5)P2 (phosphatidylinositol 3,5-bisphosphate) that senses pH changes and confers electrical excitability to organelles. Localizes to the early and recycling endosomes membranes where it plays a role in the uptake and processing of proteins and regulates organellar membrane excitability, membrane trafficking and pH homeostasis. Ion selectivity is not fixed but rather agonist-dependent and under defined ionic conditions, can be readily activated by both NAADP and PI(3,5)P2. Required for mTOR-dependent nutrient sensing. This Mus musculus (Mouse) protein is Two pore calcium channel protein 1.